A 471-amino-acid chain; its full sequence is UDP-N-acetylmuramoylalanine--D-glutamate ligase (471 aa).

123 to 129 (GTNGKST) is a binding site for ATP.

It belongs to the MurCDEF family.

Its subcellular location is the cytoplasm. The enzyme catalyses UDP-N-acetyl-alpha-D-muramoyl-L-alanine + D-glutamate + ATP = UDP-N-acetyl-alpha-D-muramoyl-L-alanyl-D-glutamate + ADP + phosphate + H(+). Its pathway is cell wall biogenesis; peptidoglycan biosynthesis. Cell wall formation. Catalyzes the addition of glutamate to the nucleotide precursor UDP-N-acetylmuramoyl-L-alanine (UMA). The polypeptide is UDP-N-acetylmuramoylalanine--D-glutamate ligase (Caulobacter vibrioides (strain ATCC 19089 / CIP 103742 / CB 15) (Caulobacter crescentus)).